A 414-amino-acid chain; its full sequence is Ornithine aminotransferase (414 aa).

Cysteine 154 and cysteine 163 are disulfide-bonded. An N6-(pyridoxal phosphate)lysine modification is found at lysine 262.

The protein belongs to the class-III pyridoxal-phosphate-dependent aminotransferase family. Homodimer. It depends on pyridoxal 5'-phosphate as a cofactor. In terms of processing, the disulfide bond between Cys-154 and Cys-163 is reduced by TRX1 which increases OAT catalytic activity.

Its subcellular location is the cytoplasm. It catalyses the reaction a 2-oxocarboxylate + L-ornithine = L-glutamate 5-semialdehyde + an L-alpha-amino acid. The enzyme catalyses L-ornithine + 2-oxoglutarate = L-glutamate 5-semialdehyde + L-glutamate. Its pathway is amino-acid biosynthesis; L-proline biosynthesis; L-glutamate 5-semialdehyde from L-ornithine: step 1/1. Its activity is regulated as follows. Unlike for mammalian OATs, activity is increased by TRX1-mediated reduction of the disulfide bond between Cys-154 and Cys-163. Binding to TRX1 may also induce conformational changes that facilitate substrate binding. Catalyzes the transamination of alpha-ketoglutarate with ornithine or N-acetylornithine and of glutamate-5-semialdehyde with glutamate and alanine. The sequence is that of Ornithine aminotransferase from Plasmodium yoelii yoelii.